The following is a 389-amino-acid chain: Lipid-A-disaccharide synthase (389 aa).

It belongs to the LpxB family.

It carries out the reaction a lipid X + a UDP-2-N,3-O-bis[(3R)-3-hydroxyacyl]-alpha-D-glucosamine = a lipid A disaccharide + UDP + H(+). It functions in the pathway bacterial outer membrane biogenesis; LPS lipid A biosynthesis. Functionally, condensation of UDP-2,3-diacylglucosamine and 2,3-diacylglucosamine-1-phosphate to form lipid A disaccharide, a precursor of lipid A, a phosphorylated glycolipid that anchors the lipopolysaccharide to the outer membrane of the cell. The protein is Lipid-A-disaccharide synthase of Burkholderia ambifaria (strain MC40-6).